A 410-amino-acid chain; its full sequence is Thyroid hormone receptor alpha (410 aa).

A disordered region spans residues 1–32 (MEQKPSKVECGSDPEESSTRSPDGKRKRKNGQ). Positions 1–52 (MEQKPSKVECGSDPEESSTRSPDGKRKRKNGQCSLKTSMSGYIPSYLDKDEQ) are modulating. Residues cysteine 53, cysteine 56, cysteine 70, cysteine 73, cysteine 91, cysteine 97, cysteine 107, and cysteine 110 each contribute to the Zn(2+) site. 2 NR C4-type zinc fingers span residues 53–73 (CVVC…CEGC) and 91–115 (CKYD…FKKC). A DNA-binding region (nuclear receptor) is located at residues 53-127 (CVVCGDKATG…VGMAMDLVLD (75 aa)). In terms of domain architecture, NR LBD spans 163 to 407 (EEWDLIHVAT…PPLFLEVFED (245 aa)). Residues arginine 228 and serine 277 each contribute to the 3,3',5-triiodo-L-thyronine site.

It belongs to the nuclear hormone receptor family. NR1 subfamily. In terms of assembly, binds DNA as a dimer; homodimer and heterodimer with RXRB. Interacts with NCOA3 and NCOA6 coactivators, leading to a strong increase of transcription of target genes. Probably interacts with SFPQ. Interacts with C1D. Interacts with AKAP13. Interacts with TP53INP2. Interacts with PER2. Interacts with TACC1. The interaction with isoform alpha-1, but not alpha-2, is decreased in the presence of thyroid hormone T3.

Its subcellular location is the nucleus. The protein resides in the cytoplasm. Nuclear hormone receptor that can act as a repressor or activator of transcription. High affinity receptor for thyroid hormones, including triiodothyronine and thyroxine. The polypeptide is Thyroid hormone receptor alpha (THRA) (Ovis aries (Sheep)).